We begin with the raw amino-acid sequence, 249 residues long: Small ribosomal subunit protein uS3 (249 aa).

In terms of domain architecture, KH type-2 spans 39 to 109 (IRTYVLARLK…EVKIDVVEVV (71 aa)). Over residues 226–239 (KERRNDAGARNRDS) the composition is skewed to basic and acidic residues. Positions 226–249 (KERRNDAGARNRDSRTKRRHRTKR) are disordered. Residues 240-249 (RTKRRHRTKR) show a composition bias toward basic residues.

It belongs to the universal ribosomal protein uS3 family. As to quaternary structure, part of the 30S ribosomal subunit. Forms a tight complex with proteins S10 and S14.

Its function is as follows. Binds the lower part of the 30S subunit head. Binds mRNA in the 70S ribosome, positioning it for translation. This chain is Small ribosomal subunit protein uS3, found in Pelodictyon phaeoclathratiforme (strain DSM 5477 / BU-1).